The chain runs to 367 residues: DNA replication and repair protein RecF (367 aa).

30–37 contributes to the ATP binding site; sequence GDNAQGKT.

This sequence belongs to the RecF family.

The protein localises to the cytoplasm. Functionally, the RecF protein is involved in DNA metabolism; it is required for DNA replication and normal SOS inducibility. RecF binds preferentially to single-stranded, linear DNA. It also seems to bind ATP. The sequence is that of DNA replication and repair protein RecF from Clostridium beijerinckii (strain ATCC 51743 / NCIMB 8052) (Clostridium acetobutylicum).